The following is a 443-amino-acid chain: Methyl-coenzyme M reductase subunit beta (443 aa).

Tyr367 is a binding site for coenzyme M. Residue Gly369 participates in coenzyme B binding.

Belongs to the methyl-coenzyme M reductase beta subunit family. As to quaternary structure, MCR is a hexamer of two alpha, two beta, and two gamma chains, forming a dimer of heterotrimers. Coenzyme F430 is required as a cofactor.

It is found in the cytoplasm. The catalysed reaction is coenzyme B + methyl-coenzyme M = methane + coenzyme M-coenzyme B heterodisulfide. Its pathway is one-carbon metabolism; methyl-coenzyme M reduction; methane from methyl-coenzyme M: step 1/1. Its function is as follows. Component of the methyl-coenzyme M reductase (MCR) I that catalyzes the reductive cleavage of methyl-coenzyme M (CoM-S-CH3 or 2-(methylthio)ethanesulfonate) using coenzyme B (CoB or 7-mercaptoheptanoylthreonine phosphate) as reductant which results in the production of methane and the mixed heterodisulfide of CoB and CoM (CoM-S-S-CoB). This is the final step in methanogenesis. This is Methyl-coenzyme M reductase subunit beta (mcrB) from Methanococcus voltae.